The chain runs to 620 residues: Palmitoyltransferase ZDHHC17 (620 aa).

At 1–292 the chain is on the cytoplasmic side; the sequence is MADALVGYEK…LKMDKEFRQK (292 aa). ANK repeat units lie at residues 77–106, 111–140, 144–173, 177–207, 212–241, and 245–274; these read ENVT…IVDQ, LNST…DPSL, EGCS…DVDM, NGMT…SVNL, HKNT…NVDA, and KGET…AKGY. The next 2 membrane-spanning stretches (helical) occupy residues 293–313 and 314–334; these read VMLG…DLDI and DSWL…QFLS. Residues 335–345 lie on the Cytoplasmic side of the membrane; that stretch reads KSFFDHSMHSA. A helical membrane pass occupies residues 346–366; sequence LPLGIYLATKFWMYITWFYWF. At 367-369 the chain is on the lumenal side; it reads WND. A helical transmembrane segment spans residues 370–390; it reads LPFVTIHLPFLLNSLALFYNF. Residues 391 to 469 lie on the Cytoplasmic side of the membrane; sequence GKSWKSDPGI…NCVGSGNHRY (79 aa). In terms of domain architecture, DHHC spans 425–475; it reads IFCSTCLIRKPIRSKHCAVCNRCIAKFDHHCPWVGNCVGSGNHRYFMGYLF. The active-site S-palmitoyl cysteine intermediate is cysteine 455. Residues 470-490 traverse the membrane as a helical segment; sequence FMGYLFFLLCMICWMMYGCIC. The Lumenal portion of the chain corresponds to 491-504; sequence YWRIHCATSYTKDG. A helical transmembrane segment spans residues 505–524; sequence FWIYITQIATCSPWMFWMFL. Residues 525–620 are Cytoplasmic-facing; it reads NSVFHFMWVA…QTSGSGYQLV (96 aa).

The protein belongs to the DHHC palmitoyltransferase family. AKR/ZDHHC17 subfamily. Post-translationally, autopalmitoylated.

Its subcellular location is the golgi apparatus membrane. The protein resides in the cytoplasmic vesicle membrane. The protein localises to the presynaptic cell membrane. It catalyses the reaction L-cysteinyl-[protein] + hexadecanoyl-CoA = S-hexadecanoyl-L-cysteinyl-[protein] + CoA. The catalysed reaction is L-cysteinyl-[protein] + tetradecanoyl-CoA = S-tetradecanoyl-L-cysteinyl-[protein] + CoA. The enzyme catalyses L-cysteinyl-[protein] + octadecanoyl-CoA = S-octadecanoyl-L-cysteinyl-[protein] + CoA. Palmitoyltransferase that catalyzes the addition of palmitate onto various protein substrates and is involved in a variety of cellular processes. Has no stringent fatty acid selectivity and in addition to palmitate can also transfer onto target proteins myristate from tetradecanoyl-CoA and stearate from octadecanoyl-CoA. Plays a role in axonogenesis. The polypeptide is Palmitoyltransferase ZDHHC17 (Danio rerio (Zebrafish)).